A 321-amino-acid chain; its full sequence is MAFLPNLVATPMSLASSYSKPVTLGIIGGTGLYKLGALTPVAQIDIDTPWGKPSSPITISETKSGFPVAFLARHGVNHDLTPTDVPSRANIAALKKVGVKAIVAFSAVGSLQEEIAPRDFVVPTQIIDRTKGIRPSSFFEKGFVGHVGFGEPFDVALGKLVAEHADKAFDNSKYKIHTKAKAGKDLTLVCMEGPAFSTRAESQLYRSWNGAVINMSAIPESKLAKEAEIAYQMICMSTDYDAWKEDEEPVTVEQVVSNLTANAESATGVVEALLEPLEKALADKSIGYDLDGSMKFAVSTAPAARDATVAKNLDFLHPGYW.

Phosphate-binding positions include Thr-30, Arg-73–His-74, and Ser-106–Ala-107. Met-215 contacts substrate. Position 216 (Ser-216) interacts with phosphate. Position 239–241 (Asp-239–Asp-241) interacts with substrate.

This sequence belongs to the PNP/MTAP phosphorylase family. MTAP subfamily. Homotrimer.

It localises to the cytoplasm. The protein localises to the nucleus. It carries out the reaction S-methyl-5'-thioadenosine + phosphate = 5-(methylsulfanyl)-alpha-D-ribose 1-phosphate + adenine. The protein operates within amino-acid biosynthesis; L-methionine biosynthesis via salvage pathway; S-methyl-5-thio-alpha-D-ribose 1-phosphate from S-methyl-5'-thioadenosine (phosphorylase route): step 1/1. Catalyzes the reversible phosphorylation of S-methyl-5'-thioadenosine (MTA) to adenine and 5-methylthioribose-1-phosphate. Involved in the breakdown of MTA, a major by-product of polyamine biosynthesis. Responsible for the first step in the methionine salvage pathway after MTA has been generated from S-adenosylmethionine. Has broad substrate specificity with 6-aminopurine nucleosides as preferred substrates. This is S-methyl-5'-thioadenosine phosphorylase from Yarrowia lipolytica (strain CLIB 122 / E 150) (Yeast).